The chain runs to 217 residues: Adenylate kinase (217 aa).

10–15 lines the ATP pocket; the sequence is GAGKGT. An NMP region spans residues 30 to 59; that stretch reads STGDMLRAQIKAGTELGMKAKAIMDAGGLV. AMP is bound by residues Thr-31, Arg-36, 57–59, 85–88, and Gln-92; these read GLV and GFPR. The interval 122 to 159 is LID; it reads GRRVHVASGRTYHVVFNPPKVAGKDDVTGEDLIQRDDD. ATP contacts are provided by residues Arg-123 and 132–133; that span reads TY. Residues Arg-156 and Arg-167 each contribute to the AMP site. ATP is bound at residue Gly-203.

It belongs to the adenylate kinase family. In terms of assembly, monomer.

The protein localises to the cytoplasm. The enzyme catalyses AMP + ATP = 2 ADP. Its pathway is purine metabolism; AMP biosynthesis via salvage pathway; AMP from ADP: step 1/1. Its function is as follows. Catalyzes the reversible transfer of the terminal phosphate group between ATP and AMP. Plays an important role in cellular energy homeostasis and in adenine nucleotide metabolism. The protein is Adenylate kinase of Thiobacillus denitrificans (strain ATCC 25259 / T1).